We begin with the raw amino-acid sequence, 92 residues long: Small ribosomal subunit protein uS19c (92 aa).

It belongs to the universal ribosomal protein uS19 family.

Its subcellular location is the plastid. It localises to the chloroplast. Functionally, protein S19 forms a complex with S13 that binds strongly to the 16S ribosomal RNA. This is Small ribosomal subunit protein uS19c from Adiantum capillus-veneris (Maidenhair fern).